Consider the following 375-residue polypeptide: GDP-mannose transporter GONST2 (375 aa).

A run of 9 helical transmembrane segments spans residues 79–99 (LVSGAAYCISSCSMIILNKIV), 112–132 (MLYQNLISCLVVAVLDISGVV), 141–161 (LIRVWMPVNVIFVGMLVSGMY), 165–185 (YINVAMVTILKNATNILTGIG), 199–219 (WAAMFMMIISAISGGITDLTF), 262–282 (MVLLNNLLSIPFGIILIILLG), 300–320 (VVATASGFLGLAISFTSMWFL), 327–347 (TYSLVGSLNKVPISLAGLVLF), and 349–369 (VPLSLPNLFSILFGLFAGVVF).

The protein belongs to the nucleotide-sugar transporter family. GDP-Mannose:GMP antiporter (GMA) (TC 2.A.7.13) subfamily. Expressed in rosette leaves, stems, flowers and siliques.

Its subcellular location is the golgi apparatus membrane. Its function is as follows. GDP-mannose transporter that may be involved in the import of GDP-mannose from the cytoplasm into the Golgi lumen. The sequence is that of GDP-mannose transporter GONST2 from Arabidopsis thaliana (Mouse-ear cress).